The chain runs to 108 residues: LBH domain-containing protein 2 (108 aa).

Over residues methionine 1–proline 11 the composition is skewed to pro residues. Residues methionine 1–glycine 108 are disordered. The LBH domain maps to glutamine 37–glutamate 62. Positions serine 63 to proline 85 are enriched in low complexity.

The protein is LBH domain-containing protein 2 of Homo sapiens (Human).